Here is a 278-residue protein sequence, read N- to C-terminus: Formamidopyrimidine-DNA glycosylase (278 aa).

Pro-2 functions as the Schiff-base intermediate with DNA in the catalytic mechanism. The Proton donor role is filled by Glu-3. Lys-57 functions as the Proton donor; for beta-elimination activity in the catalytic mechanism. Residues His-90, Arg-109, and Lys-150 each contribute to the DNA site. The segment at 235 to 269 adopts an FPG-type zinc-finger fold; that stretch reads QVYGRAGEPCRQCGHPIEIAKHGQRSTFFCRHCQF. The Proton donor; for delta-elimination activity role is filled by Arg-259.

Belongs to the FPG family. Monomer. Requires Zn(2+) as cofactor.

It catalyses the reaction Hydrolysis of DNA containing ring-opened 7-methylguanine residues, releasing 2,6-diamino-4-hydroxy-5-(N-methyl)formamidopyrimidine.. The catalysed reaction is 2'-deoxyribonucleotide-(2'-deoxyribose 5'-phosphate)-2'-deoxyribonucleotide-DNA = a 3'-end 2'-deoxyribonucleotide-(2,3-dehydro-2,3-deoxyribose 5'-phosphate)-DNA + a 5'-end 5'-phospho-2'-deoxyribonucleoside-DNA + H(+). In terms of biological role, involved in base excision repair of DNA damaged by oxidation or by mutagenic agents. Acts as a DNA glycosylase that recognizes and removes damaged bases. Has a preference for oxidized purines, such as 7,8-dihydro-8-oxoguanine (8-oxoG). Has AP (apurinic/apyrimidinic) lyase activity and introduces nicks in the DNA strand. Cleaves the DNA backbone by beta-delta elimination to generate a single-strand break at the site of the removed base with both 3'- and 5'-phosphates. The sequence is that of Formamidopyrimidine-DNA glycosylase from Yersinia pestis (strain Pestoides F).